The primary structure comprises 455 residues: Zinc finger and BTB domain-containing protein 8A.2 (455 aa).

In terms of domain architecture, BTB spans 24–92; sequence CDCHIMIDGH…MYSGKLNLSG (69 aa). 2 consecutive C2H2-type zinc fingers follow at residues 299 to 321 and 327 to 350; these read FKCP…LLCH and YPCQ…RTIH.

The protein resides in the nucleus. May be involved in transcriptional regulation. The protein is Zinc finger and BTB domain-containing protein 8A.2 (zbtb8a.2) of Xenopus tropicalis (Western clawed frog).